Consider the following 439-residue polypeptide: Microfibrillar-associated protein 1 (439 aa).

2 disordered regions span residues 1 to 27 (MSVP…NEKG) and 39 to 200 (YVSG…PRLK). Ser2 carries the post-translational modification N-acetylserine. Phosphoserine occurs at positions 52 and 53. Basic and acidic residues predominate over residues 61–70 (QFIKKAKEQE). Lys67 participates in a covalent cross-link: Glycyl lysine isopeptide (Lys-Gly) (interchain with G-Cter in SUMO2). The segment covering 71-81 (AEPEEQEEDSS) has biased composition (acidic residues). Phosphoserine is present on residues Ser94, Ser116, Ser118, Ser132, and Ser133. Acidic residues-rich tracts occupy residues 112–122 (VVGESDSEVEG) and 131–144 (DSSE…DDEE). Positions 145-163 (IERRRGMMRQRAQERKNEE) are enriched in basic and acidic residues. Positions 178–195 (ESESESEYEEYTDSEDEM) are enriched in acidic residues. Lys249 participates in a covalent cross-link: Glycyl lysine isopeptide (Lys-Gly) (interchain with G-Cter in SUMO2). Thr267 is modified (phosphothreonine). Residue Lys357 forms a Glycyl lysine isopeptide (Lys-Gly) (interchain with G-Cter in SUMO2) linkage. A Phosphoserine modification is found at Ser361. Glycyl lysine isopeptide (Lys-Gly) (interchain with G-Cter in SUMO2) cross-links involve residues Lys371, Lys381, Lys415, and Lys418. Position 432 is a phosphoserine (Ser432).

It belongs to the MFAP1 family. In terms of assembly, component of the spliceosome B complex. Interacts with PRPF38A (via N-terminal interaction domain).

The protein resides in the nucleus. Functionally, involved in pre-mRNA splicing as a component of the spliceosome. The polypeptide is Microfibrillar-associated protein 1 (Homo sapiens (Human)).